The following is a 1165-amino-acid chain: MTCPKFSVALLHWEFIYVITAFDLAYPITPWKFKLSCMPPNTTYDFLLPAGISKNTSTLNGHDEAVVETELNSSGTYLSNLSSKTTFHCCFWSEEDKNCSVHADNIAGKAFVSAVNSLVFQQTGANWNIQCWMKEDLKLFICYMESLFKNPFKNYDLKVHLLYVLLEVLEGSPLLPQKGSFQSVQCNCSARECCECHVPVSAAKLNYTLLMYLKITSGGAVFHSPLMSVQPINVVKPDPPLGLHMEITDTGNLKISWSSPTLVPFQLQYQVKYSENSTTNMREADEIVSDTSLLVDSVLPGSSYEVQVRGKRLDGPGIWSDWSTPFTFTTQDVIYFPPKILTSVGSNISFHCIYKNENKIVSSKKIVWWMNLAEKIPQSQYDVVGDHVSKVTFPNMNATKPRGKFTYDAVYCCNEHECHHRYAELYVIDVNINISCETDGYLTKMTCRWSTNAIQSLVGSTLQLRYHRSSLYCSDVPSVHPISEPKDCQLQRDGFYECIFQPIFLLSGYTMWIRINHPLGSLDSPPTCVIPDSVVKPLPPSSVKAEITAKIGLLKISWEKPVFPENNLQFQIRYGLSGKEVQWKIYEVYDTKLKSTSLPVPDLCAVYAVQVRCKRLDGLGYWSNWSTPAYTVVTDVKVPIRGPEFWRIINEDATKKERNITLLWKPLMKNDSLCSVRSYVVKHHTSRHGTWSEDVGNHTKLTFLWTEQAHSVTVLAVNSIGASSANFNLTFSWPMSKVNIVQSLSAYPLNSSCVGLSWLLSPSDYNLMYFILEWKILNEDHEIKWLRIPSSVKKYYIHDHFIPIEKYQFSLYPIFMEGVGKPKIINSFTQDGEKHRNDAGLYVIVPIIISSSILLLGTLLMSHQRMKKLFWEDVPNPKNCSWAQGLNFQKPETFEHLFIKHTESVTFGPLLLEPETISEDISVDTSWKNKDEMVPPTTVSLLLTTPDLEKSSICISDQRSSAHFSEAESMEITREDENRRQPSIKYATLLSSPKSGETEQEQELVSSLVSRCFSSSNSLPKESFSNSSWEIETQAFFILSDQHPNMTSPHLSFSEGLDELMKFEGNFPKEHNDERSVYYLGVTSIKKRESDVFLTDESRVRCPFPAHCLFADIKILQESCSHLVENNFNLGTSGQKTFVSYMPQFQTCSTQTQKIMENKMYDLTV.

Positions 1–21 (MTCPKFSVALLHWEFIYVITA) are cleaved as a signal peptide. Residues 22–838 (FDLAYPITPW…TQDGEKHRND (817 aa)) lie on the Extracellular side of the membrane. 5 disulfide bridges follow: Cys-37–Cys-90, Cys-89–Cys-99, Cys-131–Cys-142, Cys-186–Cys-196, and Cys-188–Cys-193. N-linked (GlcNAc...) asparagine glycosylation is found at Asn-41, Asn-55, Asn-72, Asn-80, and Asn-98. Residue Asn-187 is glycosylated (N-linked (GlcNAc...) asparagine). Residues Asn-206, Asn-276, Asn-347, and Asn-397 are each glycosylated (N-linked (GlcNAc...) asparagine). Positions 239 to 332 (PPLGLHMEIT…STPFTFTTQD (94 aa)) constitute a Fibronectin type-III 1 domain. 2 disulfides stabilise this stretch: Cys-352/Cys-412 and Cys-413/Cys-418. The N-linked (GlcNAc...) asparagine glycan is linked to Asn-433. Cystine bridges form between Cys-436–Cys-447, Cys-473–Cys-528, and Cys-488–Cys-498. The interval 467-484 (HRSSLYCSDVPSVHPISE) is leptin-binding. 3 Fibronectin type-III domains span residues 539 to 634 (PPSS…TVVT), 642 to 736 (GPEF…WPMS), and 740 to 834 (IVQS…DGEK). Positions 622–626 (WSNWS) match the WSXWS motif motif. Residues Asn-624, Asn-659, Asn-670, Asn-697, Asn-728, and Asn-750 are each glycosylated (N-linked (GlcNAc...) asparagine). Residues 839 to 861 (AGLYVIVPIIISSSILLLGTLLM) form a helical membrane-spanning segment. The Cytoplasmic portion of the chain corresponds to 862–1165 (SHQRMKKLFW…MENKMYDLTV (304 aa)). Positions 870-878 (FWEDVPNPK) match the Box 1 motif motif. Ser-881 carries the phosphoserine modification. The segment at 892-897 (ETFEHL) is required for JAK2 activation. Residues 897–905 (LFIKHTESV) form a required for STAT3 phosphorylation region. Position 986 is a phosphotyrosine; by JAK2 (Tyr-986). Residue Tyr-1079 is modified to Phosphotyrosine. Tyr-1141 carries the post-translational modification Phosphotyrosine; by JAK2.

This sequence belongs to the type I cytokine receptor family. Type 2 subfamily. As to quaternary structure, present as a mixture of monomers and dimers. The phosphorylated receptor binds a number of SH2 domain-containing proteins such as JAK2, STAT3, PTPN11, and SOCS3. Interaction with SOCS3 inhibits JAK/STAT signaling and MAPK cascade. On ligand binding, phosphorylated on two conserved C-terminal tyrosine residues by JAK2. Tyr-986 is required for complete binding and activation of PTPN11, ERK/FOS activation,for interaction with SOCS3 and SOCS3 mediated inhibition of leptin signaling. Phosphorylation on Tyr-1141 is required for STAT3 binding/activation. Phosphorylation of Tyr-1079 has a more accessory role. In terms of tissue distribution, kidney, liver, spleen, lung, brain, testis, uterus, ovary, corpus luteum, theca and granulosa cells.

It is found in the cell membrane. The protein resides in the basolateral cell membrane. Functionally, receptor for hormone LEP/leptin. On ligand binding, mediates LEP central and peripheral effects through the activation of different signaling pathways such as JAK2/STAT3 and MAPK cascade/FOS. In the hypothalamus, LEP acts as an appetite-regulating factor that induces a decrease in food intake and an increase in energy consumption by inducing anorexinogenic factors and suppressing orexigenic neuropeptides, also regulates bone mass and secretion of hypothalamo-pituitary-adrenal hormones. In the periphery, increases basal metabolism, influences reproductive function, regulates pancreatic beta-cell function and insulin secretion, is pro-angiogenic and affects innate and adaptive immunity. Control of energy homeostasis and melanocortin production (stimulation of POMC and full repression of AgRP transcription) is mediated by STAT3 signaling, whereas distinct signals regulate NPY and the control of fertility, growth and glucose homeostasis. Involved in the regulation of counter-regulatory response to hypoglycemia by inhibiting neurons of the parabrachial nucleus. Has a specific effect on T lymphocyte responses, differentially regulating the proliferation of naive and memory T-cells. Leptin increases Th1 and suppresses Th2 cytokine production. This Sus scrofa (Pig) protein is Leptin receptor (LEPR).